The sequence spans 357 residues: Protein RecA (357 aa).

Position 71–78 (71–78 (GPESSGKT)) interacts with ATP.

This sequence belongs to the RecA family.

The protein resides in the cytoplasm. Functionally, can catalyze the hydrolysis of ATP in the presence of single-stranded DNA, the ATP-dependent uptake of single-stranded DNA by duplex DNA, and the ATP-dependent hybridization of homologous single-stranded DNAs. It interacts with LexA causing its activation and leading to its autocatalytic cleavage. In Ehrlichia chaffeensis (strain ATCC CRL-10679 / Arkansas), this protein is Protein RecA.